The following is a 631-amino-acid chain: Mercuric reductase (631 aa).

2 HMA domains span residues 2-66 (KKYR…YHPG) and 81-145 (KKYR…YQPG). Residues C13, C16, C92, and C95 each coordinate a metal cation. A181, G201, and T206 together coordinate FAD. Cysteines 207 and 212 form a disulfide. Residues K216, D472, and V480 each coordinate FAD. C628 and C629 together coordinate Hg(2+).

It belongs to the class-I pyridine nucleotide-disulfide oxidoreductase family. Homodimer. FAD is required as a cofactor.

The enzyme catalyses Hg + NADP(+) + H(+) = Hg(2+) + NADPH. Its function is as follows. Resistance to Hg(2+) in bacteria appears to be governed by a specialized system which includes mercuric reductase. MerA protein is responsible for volatilizing mercury as Hg(0). This is Mercuric reductase (merA) from Bacillus cereus.